Here is a 493-residue protein sequence, read N- to C-terminus: Glutamate--tRNA ligase (493 aa).

Residues 10 to 20 (PSPTGDPHVGT) carry the 'HIGH' region motif. Positions 251 to 255 (KLSKR) match the 'KMSKS' region motif. Position 254 (Lys-254) interacts with ATP.

This sequence belongs to the class-I aminoacyl-tRNA synthetase family. Glutamate--tRNA ligase type 1 subfamily. Monomer.

The protein localises to the cytoplasm. It catalyses the reaction tRNA(Glu) + L-glutamate + ATP = L-glutamyl-tRNA(Glu) + AMP + diphosphate. Its function is as follows. Catalyzes the attachment of glutamate to tRNA(Glu) in a two-step reaction: glutamate is first activated by ATP to form Glu-AMP and then transferred to the acceptor end of tRNA(Glu). The protein is Glutamate--tRNA ligase of Marinomonas sp. (strain MWYL1).